The sequence spans 91 residues: RNA-binding protein Hfq (91 aa).

The region spanning 9–68 is the Sm domain; the sequence is DPYLNALRRERIPVSIYLVNGIKLQGQIESFDQFVILLKNTVNQMVYKHAISTVVPARSV. A disordered region spans residues 68 to 91; that stretch reads VSHHNNNHHTTPTEAVENVETQAE.

Belongs to the Hfq family. As to quaternary structure, homohexamer.

RNA chaperone that binds small regulatory RNA (sRNAs) and mRNAs to facilitate mRNA translational regulation in response to envelope stress, environmental stress and changes in metabolite concentrations. Also binds with high specificity to tRNAs. The polypeptide is RNA-binding protein Hfq (Haemophilus influenzae (strain 86-028NP)).